Consider the following 215-residue polypeptide: Probable transaldolase (215 aa).

K83 serves as the catalytic Schiff-base intermediate with substrate.

It belongs to the transaldolase family. Type 3B subfamily.

It localises to the cytoplasm. It catalyses the reaction D-sedoheptulose 7-phosphate + D-glyceraldehyde 3-phosphate = D-erythrose 4-phosphate + beta-D-fructose 6-phosphate. Its pathway is carbohydrate degradation; pentose phosphate pathway; D-glyceraldehyde 3-phosphate and beta-D-fructose 6-phosphate from D-ribose 5-phosphate and D-xylulose 5-phosphate (non-oxidative stage): step 2/3. Functionally, transaldolase is important for the balance of metabolites in the pentose-phosphate pathway. The protein is Probable transaldolase of Moorella thermoacetica (strain ATCC 39073 / JCM 9320).